The chain runs to 278 residues: Non-heme chloroperoxidase (278 aa).

The AB hydrolase-1 domain maps to 26 to 264; the sequence is PVVLIHGFPL…GAPHGLLWTH (239 aa). Catalysis depends on residues Ser-99, Asp-229, and His-258.

Belongs to the AB hydrolase superfamily. Bacterial non-heme haloperoxidase / perhydrolase family. In terms of assembly, homodimer.

This Kitasatospora aureofaciens (Streptomyces aureofaciens) protein is Non-heme chloroperoxidase (cpo).